We begin with the raw amino-acid sequence, 74 residues long: U3-agatoxin-Ao1g (74 aa).

The first 20 residues, 1 to 20 (MRAIISLLLISTMVFGVIEA), serve as a signal peptide directing secretion. A propeptide spanning residues 21 to 34 (VSVEEGLKIFEGER) is cleaved from the precursor. 4 disulfide bridges follow: cysteine 37–cysteine 53, cysteine 44–cysteine 58, cysteine 52–cysteine 68, and cysteine 60–cysteine 66. The residue at position 72 (asparagine 72) is an Asparagine amide.

This sequence belongs to the neurotoxin 07 (Beta/delta-agtx) family. 03 (aga-4) subfamily. Aga sub-subfamily. Expressed by the venom gland.

It is found in the secreted. Functionally, insecticidal neurotoxin that modulates the insect Nav channel (DmNaV1/tipE (para/tipE)) in a unique manner, with both the activation and inactivation processes being affected. The voltage dependence of activation is shifted toward more hyperpolarized potentials (analogous to site 4 toxins) and a non-inactivating persistent sodium current is induced (site 3-like action). Interestingly, both effects take place in a voltage-dependent manner, producing a bell-shaped curve between -80 and 0 mV. The polypeptide is U3-agatoxin-Ao1g (Agelena orientalis (Funnel-web spider)).